Consider the following 73-residue polypeptide: Sec-independent protein translocase protein TatA (73 aa).

A helical transmembrane segment spans residues 1 to 21 (MGSFSIWHWMIVLVIVLLVFG).

The protein belongs to the TatA/E family. The Tat system comprises two distinct complexes: a TatABC complex, containing multiple copies of TatA, TatB and TatC subunits, and a separate TatA complex, containing only TatA subunits. Substrates initially bind to the TatABC complex, which probably triggers association of the separate TatA complex to form the active translocon.

It is found in the cell inner membrane. Functionally, part of the twin-arginine translocation (Tat) system that transports large folded proteins containing a characteristic twin-arginine motif in their signal peptide across membranes. TatA could form the protein-conducting channel of the Tat system. The chain is Sec-independent protein translocase protein TatA from Mesorhizobium japonicum (strain LMG 29417 / CECT 9101 / MAFF 303099) (Mesorhizobium loti (strain MAFF 303099)).